The sequence spans 401 residues: Argininosuccinate synthase (401 aa).

9-17 (AYSGGLDTS) provides a ligand contact to ATP. Y86 contacts L-citrulline. G116 contacts ATP. T118, N122, and D123 together coordinate L-aspartate. N122 is an L-citrulline binding site. Residues R126, S174, S183, E259, and Y271 each coordinate L-citrulline.

Belongs to the argininosuccinate synthase family. Type 1 subfamily. As to quaternary structure, homotetramer.

The protein localises to the cytoplasm. The catalysed reaction is L-citrulline + L-aspartate + ATP = 2-(N(omega)-L-arginino)succinate + AMP + diphosphate + H(+). It participates in amino-acid biosynthesis; L-arginine biosynthesis; L-arginine from L-ornithine and carbamoyl phosphate: step 2/3. The polypeptide is Argininosuccinate synthase (Bacillus anthracis (strain A0248)).